A 465-amino-acid polypeptide reads, in one-letter code: Cysteine--tRNA ligase (465 aa).

C30 lines the Zn(2+) pocket. The short motif at 32–42 (ITVYDYCHVGH) is the 'HIGH' region element. Zn(2+) contacts are provided by C214, H239, and E243. The 'KMSKS' region motif lies at 271–275 (KMSKS). K274 is a binding site for ATP.

This sequence belongs to the class-I aminoacyl-tRNA synthetase family. In terms of assembly, monomer. The cofactor is Zn(2+).

Its subcellular location is the cytoplasm. It carries out the reaction tRNA(Cys) + L-cysteine + ATP = L-cysteinyl-tRNA(Cys) + AMP + diphosphate. The protein is Cysteine--tRNA ligase of Burkholderia orbicola (strain MC0-3).